The chain runs to 428 residues: Serine--tRNA ligase (428 aa).

231 to 233 (TAE) provides a ligand contact to L-serine. ATP is bound by residues 262 to 264 (RRE) and V278. L-serine is bound at residue E285. 349 to 352 (EVSS) is a binding site for ATP. S384 contacts L-serine.

Belongs to the class-II aminoacyl-tRNA synthetase family. Type-1 seryl-tRNA synthetase subfamily. Homodimer. The tRNA molecule binds across the dimer.

The protein resides in the cytoplasm. It carries out the reaction tRNA(Ser) + L-serine + ATP = L-seryl-tRNA(Ser) + AMP + diphosphate + H(+). The catalysed reaction is tRNA(Sec) + L-serine + ATP = L-seryl-tRNA(Sec) + AMP + diphosphate + H(+). The protein operates within aminoacyl-tRNA biosynthesis; selenocysteinyl-tRNA(Sec) biosynthesis; L-seryl-tRNA(Sec) from L-serine and tRNA(Sec): step 1/1. Functionally, catalyzes the attachment of serine to tRNA(Ser). Is also able to aminoacylate tRNA(Sec) with serine, to form the misacylated tRNA L-seryl-tRNA(Sec), which will be further converted into selenocysteinyl-tRNA(Sec). This Chlamydia trachomatis serovar A (strain ATCC VR-571B / DSM 19440 / HAR-13) protein is Serine--tRNA ligase.